A 218-amino-acid chain; its full sequence is GTP cyclohydrolase 1 (218 aa).

Cysteine 109, histidine 112, and cysteine 180 together coordinate Zn(2+).

It belongs to the GTP cyclohydrolase I family. Toroid-shaped homodecamer, composed of two pentamers of five dimers.

The catalysed reaction is GTP + H2O = 7,8-dihydroneopterin 3'-triphosphate + formate + H(+). Its pathway is cofactor biosynthesis; 7,8-dihydroneopterin triphosphate biosynthesis; 7,8-dihydroneopterin triphosphate from GTP: step 1/1. The polypeptide is GTP cyclohydrolase 1 (Haemophilus ducreyi (strain 35000HP / ATCC 700724)).